A 90-amino-acid chain; its full sequence is Histone H1.M6.2 (90 aa).

The tract at residues 1–90 is disordered; the sequence is MSDAAVPPKK…KAVKKAPKKK (90 aa). Residues 11–90 are compositionally biased toward basic residues; the sequence is ASPKKAAAKK…KAVKKAPKKK (80 aa).

The protein localises to the nucleus. Its subcellular location is the chromosome. This chain is Histone H1.M6.2, found in Trypanosoma cruzi.